The sequence spans 405 residues: Replication factor C large subunit (405 aa).

An ATP-binding site is contributed by 47–54 (GPPGVGKT).

Belongs to the activator 1 small subunits family. RfcL subfamily. Heteromultimer composed of small subunits (RfcS) and large subunits (RfcL).

Its function is as follows. Part of the RFC clamp loader complex which loads the PCNA sliding clamp onto DNA. This Saccharolobus islandicus (strain M.16.4 / Kamchatka #3) (Sulfolobus islandicus) protein is Replication factor C large subunit.